The sequence spans 358 residues: Homoserine O-acetyltransferase (358 aa).

The 286-residue stretch at 52–337 (NVILICHALT…DEPYGHDAFL (286 aa)) folds into the AB hydrolase-1 domain. S148 acts as the Nucleophile in catalysis. A substrate-binding site is contributed by R217. Catalysis depends on residues D304 and H333. A substrate-binding site is contributed by D334.

This sequence belongs to the AB hydrolase superfamily. MetX family. As to quaternary structure, homodimer.

It localises to the cytoplasm. It carries out the reaction L-homoserine + acetyl-CoA = O-acetyl-L-homoserine + CoA. It functions in the pathway amino-acid biosynthesis; L-methionine biosynthesis via de novo pathway; O-acetyl-L-homoserine from L-homoserine: step 1/1. Functionally, transfers an acetyl group from acetyl-CoA to L-homoserine, forming acetyl-L-homoserine. This chain is Homoserine O-acetyltransferase, found in Chlorobium luteolum (strain DSM 273 / BCRC 81028 / 2530) (Pelodictyon luteolum).